We begin with the raw amino-acid sequence, 1456 residues long: Sterol 3-beta-glucosyltransferase (1456 aa).

Residues 60 to 70 (ESDEEDGDEVE) are compositionally biased toward acidic residues. 2 disordered regions span residues 60–113 (ESDE…SISH) and 128–156 (LSPHSLCHTSSHEASRRGSAEQPSRTQSE). The span at 71–104 (TPSTTTTAVSPSATMSAPSPTATAPTPHSGTHTP) shows a compositional bias: low complexity. The span at 137–146 (SSHEASRRGS) shows a compositional bias: basic and acidic residues. In terms of domain architecture, GRAM 1 spans 200 to 247 (QKLKGFAALDVDEQLIADYPVWLLKNVLIQGHLYITAKHMCFLSYLPR). One can recognise a PH domain in the interval 251 to 351 (ANIRSGTLVK…WVKALQKEIF (101 aa)). Disordered regions lie at residues 462 to 512 (HSAH…PRLP) and 524 to 776 (DKCD…QDTF). Basic and acidic residues predominate over residues 496–508 (QPHERDEKRDSKL). Residues 556–567 (LASQRTSSSTLF) are compositionally biased toward polar residues. 2 stretches are compositionally biased toward low complexity: residues 576 to 606 (SQPTTPGVHAPGSSTPGGSYGTTTPGTPASA) and 647 to 676 (GGATSSGAATGATTPGGAAAPGSTGNSSPG). Over residues 677–696 (TPGGLGGPGAVGAGGPGVMG) the composition is skewed to gly residues. The span at 719-735 (APHDPAAAAAAADAAAP) shows a compositional bias: low complexity. The region spanning 827–893 (ERFQKRFALG…KVVENATKDS (67 aa)) is the GRAM 2 domain. Positions 1004, 1005, 1007, 1279, 1307, 1310, 1323, 1326, 1327, 1328, 1347, and 1348 each coordinate UDP-alpha-D-glucose.

It belongs to the glycosyltransferase 28 family.

It localises to the cytoplasm. It is found in the membrane. The catalysed reaction is a sterol + UDP-alpha-D-glucose = a sterol 3-beta-D-glucoside + UDP + H(+). The enzyme catalyses ergosterol + UDP-alpha-D-glucose = ergosteryl 3-beta-D-glucoside + UDP + H(+). In terms of biological role, sterol glycosyltransferase responsible for the glycosylation of ergosterol to form ergosterol-glucoside. The sequence is that of Sterol 3-beta-glucosyltransferase from Yarrowia lipolytica (strain CLIB 122 / E 150) (Yeast).